The chain runs to 212 residues: Protein-L-isoaspartate O-methyltransferase (212 aa).

S60 is a catalytic residue.

The protein belongs to the methyltransferase superfamily. L-isoaspartyl/D-aspartyl protein methyltransferase family.

It localises to the cytoplasm. It catalyses the reaction [protein]-L-isoaspartate + S-adenosyl-L-methionine = [protein]-L-isoaspartate alpha-methyl ester + S-adenosyl-L-homocysteine. Functionally, catalyzes the methyl esterification of L-isoaspartyl residues in peptides and proteins that result from spontaneous decomposition of normal L-aspartyl and L-asparaginyl residues. It plays a role in the repair and/or degradation of damaged proteins. The protein is Protein-L-isoaspartate O-methyltransferase of Pseudomonas putida (strain W619).